The following is a 370-amino-acid chain: Probable neutral protease 2 homolog ARB_03949 (370 aa).

Residues 1–19 (MQLVAALAALGALVAPAVA) form the signal peptide. Residues 20-188 (YPHAPMNETL…SIHSRALQKR (169 aa)) constitute a propeptide that is removed on maturation. Disulfide bonds link Cys196/Cys267 and Cys274/Cys292. His316 is a Zn(2+) binding site. Glu317 is an active-site residue. His320 and Asp331 together coordinate Zn(2+).

This sequence belongs to the peptidase M35 family. Zn(2+) is required as a cofactor.

The protein resides in the secreted. The enzyme catalyses Preferential cleavage of bonds with hydrophobic residues in P1'. Also 3-Asn-|-Gln-4 and 8-Gly-|-Ser-9 bonds in insulin B chain.. Functionally, probable secreted metalloprotease that shows high activities on basic nuclear substrates such as histone and protamine. May be involved in virulence. The sequence is that of Probable neutral protease 2 homolog ARB_03949 from Arthroderma benhamiae (strain ATCC MYA-4681 / CBS 112371) (Trichophyton mentagrophytes).